Here is a 704-residue protein sequence, read N- to C-terminus: MARQVALDKVRNIGIMAHIDAGKTTTTERILYYTGRLHKMGEVHEGGATMDWMEQEKERGITITSAATTCFWTPKFGNYSGVNHRINIIDTPGHVDFTVEVERSLRVLDGAVALFCAVGGVEPQSETVWRQANKYGVPRIAYVNKMDRTGADFFNAVKAIRERLGANPVPIQIPIGEGEMFAGFVDLIRMKGIIYDKEDGSTYEEVAIPHDLENEARTWRINMLEAVSELDETLLEKYLNGDDITEEEIRSVLRQATLNVSIIPVLCGSSFKNKGVQFMLDAVIDYLASPVDDGVVEGHDPRTEEEIVRQPKDEEPFAALAFKIATDPFVGKLTFFRVYSGVLNAGSYVLNSVTGKKERVGRVLQMHSNKREERDAVYAGDIAAAVGLKEVRTGDTLCDENKPIVLEKMVFPEPVIEIAVEPKTKADNDKLGMSLAKLAEEDPTFRVKTDEETGQTLIAGMGELHLEVLVDRLKREFKVEANVGQPQVAYRETIRGTVEHEGKFVRQSGGKGQFGLVVLRLEPLEEGKGYEFVDEIKGGAIPKEYIPSVNAGIQQAMKDGVVAGFPMQDVKVALIDGKYHEVDSSEMAFKIAGSIGFKGAAKKANPVLLEPIMKVEVITPEEYLGDVMGDLSGRRGHIEGMGERAGAQFVKAKVPLSEMFGYSTTLRSMTQGRANYSMEFETYREVPRNIAETLQEKRVGKDSE.

Residues 8-291 form the tr-type G domain; it reads DKVRNIGIMA…AVIDYLASPV (284 aa). Residues 17 to 24, 90 to 94, and 144 to 147 contribute to the GTP site; these read AHIDAGKT, DTPGH, and NKMD.

The protein belongs to the TRAFAC class translation factor GTPase superfamily. Classic translation factor GTPase family. EF-G/EF-2 subfamily.

It is found in the cytoplasm. Its function is as follows. Catalyzes the GTP-dependent ribosomal translocation step during translation elongation. During this step, the ribosome changes from the pre-translocational (PRE) to the post-translocational (POST) state as the newly formed A-site-bound peptidyl-tRNA and P-site-bound deacylated tRNA move to the P and E sites, respectively. Catalyzes the coordinated movement of the two tRNA molecules, the mRNA and conformational changes in the ribosome. This chain is Elongation factor G, found in Chlorobaculum parvum (strain DSM 263 / NCIMB 8327) (Chlorobium vibrioforme subsp. thiosulfatophilum).